A 67-amino-acid polypeptide reads, in one-letter code: MAVPKRKMSRANTRMRRSQWKAQAPKLVKTVENGKVSYSLPHQAKLVSDSAGTPLFYEYKGRKVADA.

The span at 1 to 19 shows a compositional bias: basic residues; that stretch reads MAVPKRKMSRANTRMRRSQ. Positions 1-22 are disordered; that stretch reads MAVPKRKMSRANTRMRRSQWKA.

It belongs to the bacterial ribosomal protein bL32 family.

The protein is Large ribosomal subunit protein bL32 of Kocuria rhizophila (strain ATCC 9341 / DSM 348 / NBRC 103217 / DC2201).